The chain runs to 302 residues: Ribosomal RNA small subunit methyltransferase H (302 aa).

S-adenosyl-L-methionine is bound by residues 36–38 (GGH), aspartate 56, phenylalanine 84, aspartate 99, and glutamine 106.

The protein belongs to the methyltransferase superfamily. RsmH family.

It is found in the cytoplasm. The enzyme catalyses cytidine(1402) in 16S rRNA + S-adenosyl-L-methionine = N(4)-methylcytidine(1402) in 16S rRNA + S-adenosyl-L-homocysteine + H(+). In terms of biological role, specifically methylates the N4 position of cytidine in position 1402 (C1402) of 16S rRNA. This Christiangramia forsetii (strain DSM 17595 / CGMCC 1.15422 / KT0803) (Gramella forsetii) protein is Ribosomal RNA small subunit methyltransferase H.